The following is a 472-amino-acid chain: ATP synthase subunit beta (472 aa).

An ATP-binding site is contributed by 150–157 (GGAGVGKT).

Belongs to the ATPase alpha/beta chains family. In terms of assembly, F-type ATPases have 2 components, CF(1) - the catalytic core - and CF(0) - the membrane proton channel. CF(1) has five subunits: alpha(3), beta(3), gamma(1), delta(1), epsilon(1). CF(0) has four main subunits: a, b, b' and c.

It is found in the cellular chromatophore membrane. It catalyses the reaction ATP + H2O + 4 H(+)(in) = ADP + phosphate + 5 H(+)(out). Its function is as follows. Produces ATP from ADP in the presence of a proton gradient across the membrane. The catalytic sites are hosted primarily by the beta subunits. The protein is ATP synthase subunit beta of Rhodobacter capsulatus (Rhodopseudomonas capsulata).